The primary structure comprises 423 residues: Mannose-6-phosphate isomerase (423 aa).

Alanine 2 carries the post-translational modification N-acetylalanine. Phosphoserine occurs at positions 102 and 108. Zn(2+)-binding residues include glutamine 110, histidine 112, glutamate 137, and histidine 276. Residue arginine 295 is part of the active site.

Belongs to the mannose-6-phosphate isomerase type 1 family. It depends on Zn(2+) as a cofactor.

The protein localises to the cytoplasm. The enzyme catalyses D-mannose 6-phosphate = D-fructose 6-phosphate. It functions in the pathway nucleotide-sugar biosynthesis; GDP-alpha-D-mannose biosynthesis; alpha-D-mannose 1-phosphate from D-fructose 6-phosphate: step 1/2. In terms of biological role, isomerase that catalyzes the interconversion of fructose-6-P and mannose-6-P and has a critical role in the supply of D-mannose derivatives required for many eukaryotic glycosylation reactions. The chain is Mannose-6-phosphate isomerase from Rattus norvegicus (Rat).